A 461-amino-acid polypeptide reads, in one-letter code: Ornithine decarboxylase (461 aa).

Position 69 is an N6-(pyridoxal phosphate)lysine (lysine 69). Residues serine 200, glycine 237, and 274 to 277 (EPGR) contribute to the pyridoxal 5'-phosphate site. Serine 303 carries the phosphoserine; by CK2 modification. 331–332 (YD) is a binding site for substrate. Cysteine 360 serves as the catalytic Proton donor; shared with dimeric partner. Cysteine 360 is subject to S-nitrosocysteine. A substrate-binding site is contributed by aspartate 361. Tyrosine 389 lines the pyridoxal 5'-phosphate pocket.

It belongs to the Orn/Lys/Arg decarboxylase class-II family. As to quaternary structure, homodimer. Only the dimer is catalytically active, as the active sites are constructed of residues from both monomers. The cofactor is pyridoxal 5'-phosphate.

The catalysed reaction is L-ornithine + H(+) = putrescine + CO2. Its pathway is amine and polyamine biosynthesis; putrescine biosynthesis via L-ornithine pathway; putrescine from L-ornithine: step 1/1. With respect to regulation, inhibited by antizymes (AZs) OAZ1, OAZ2 and OAZ3 in response to polyamine levels. AZs inhibit the assembly of the functional homodimer by binding to ODC monomers. Additionally, OAZ1 targets ODC monomers for ubiquitin-independent proteolytic destruction by the 26S proteasome. Functionally, catalyzes the first and rate-limiting step of polyamine biosynthesis that converts ornithine into putrescine, which is the precursor for the polyamines, spermidine and spermine. Polyamines are essential for cell proliferation and are implicated in cellular processes, ranging from DNA replication to apoptosis. The chain is Ornithine decarboxylase (ODC1) from Bos taurus (Bovine).